Reading from the N-terminus, the 80-residue chain is RNA-binding protein KhpA (80 aa).

The KH domain maps to 33 to 80; it reads GRTVEVHVHPDDLGKVIGRGGRTATALRKLVAGIGGRGIRVDVVDTDQ.

The protein belongs to the KhpA RNA-binding protein family.

The protein localises to the cytoplasm. A probable RNA-binding protein. This Mycobacterium leprae (strain TN) protein is RNA-binding protein KhpA.